The chain runs to 566 residues: Arginine--tRNA ligase (566 aa).

Positions 121–131 (ANPNGPFHIGH) match the 'HIGH' region motif.

Belongs to the class-I aminoacyl-tRNA synthetase family.

It localises to the cytoplasm. It catalyses the reaction tRNA(Arg) + L-arginine + ATP = L-arginyl-tRNA(Arg) + AMP + diphosphate. The chain is Arginine--tRNA ligase from Methanococcus maripaludis (strain C7 / ATCC BAA-1331).